The sequence spans 522 residues: Aspartic and glutamic acid-rich protein (522 aa).

The first 16 residues, 1-16, serve as a signal peptide directing secretion; it reads MKVFVYLLVTFSLTNA. 2 stretches are compositionally biased toward basic and acidic residues: residues 72 to 81 and 93 to 102; these read YDDFFPKDTS and SRNDDGYDLA. Residues 72 to 497 are disordered; that stretch reads YDDFFPKDTS…KSKDAAQGNI (426 aa). Residues 109-125 show a composition bias toward acidic residues; sequence DDEEAYDDFDEVDDRAD. Basic and acidic residues predominate over residues 142-152; it reads KLPAEEESKND. Acidic residues-rich tracts occupy residues 153-166, 173-200, 228-261, and 267-283; these read MDEE…EEDK, FAED…EDEV, DNEE…DESD, and EVED…TEEG. The span at 284-343 shows a compositional bias: basic and acidic residues; the sequence is SEIKQNDETEEQPEKKFDADKEHEDAPEPLKEKLSDESKARAEDESDKSEDAAKEIKEPE. Residues 319-465 are a coiled coil; that stretch reads DESKARAEDE…KSNLALKRDE (147 aa). Over residues 358–374 the composition is skewed to acidic residues; the sequence is DEAELLDDEAELSDDEA. 3 stretches are compositionally biased toward basic and acidic residues: residues 375-397, 407-453, and 461-491; these read ELSK…KAEK, DEAK…EFAK, and LKRD…KSKD.

In terms of tissue distribution, component of the acid-soluble organic matrix of the aragonitic skeleton (at protein level).

It localises to the secreted. In Acropora millepora (Staghorn coral), this protein is Aspartic and glutamic acid-rich protein.